A 205-amino-acid polypeptide reads, in one-letter code: Thiamine-phosphate synthase (205 aa).

4-amino-2-methyl-5-(diphosphooxymethyl)pyrimidine is bound by residues 35 to 39 (QYRDK) and asparagine 67. Residues aspartate 68 and aspartate 86 each contribute to the Mg(2+) site. Threonine 105 is a binding site for 4-amino-2-methyl-5-(diphosphooxymethyl)pyrimidine. 132-134 (SLT) contributes to the 2-[(2R,5Z)-2-carboxy-4-methylthiazol-5(2H)-ylidene]ethyl phosphate binding site. Lysine 135 is a 4-amino-2-methyl-5-(diphosphooxymethyl)pyrimidine binding site. Glycine 162 is a binding site for 2-[(2R,5Z)-2-carboxy-4-methylthiazol-5(2H)-ylidene]ethyl phosphate.

It belongs to the thiamine-phosphate synthase family. Mg(2+) is required as a cofactor.

The enzyme catalyses 2-[(2R,5Z)-2-carboxy-4-methylthiazol-5(2H)-ylidene]ethyl phosphate + 4-amino-2-methyl-5-(diphosphooxymethyl)pyrimidine + 2 H(+) = thiamine phosphate + CO2 + diphosphate. The catalysed reaction is 2-(2-carboxy-4-methylthiazol-5-yl)ethyl phosphate + 4-amino-2-methyl-5-(diphosphooxymethyl)pyrimidine + 2 H(+) = thiamine phosphate + CO2 + diphosphate. It catalyses the reaction 4-methyl-5-(2-phosphooxyethyl)-thiazole + 4-amino-2-methyl-5-(diphosphooxymethyl)pyrimidine + H(+) = thiamine phosphate + diphosphate. The protein operates within cofactor biosynthesis; thiamine diphosphate biosynthesis; thiamine phosphate from 4-amino-2-methyl-5-diphosphomethylpyrimidine and 4-methyl-5-(2-phosphoethyl)-thiazole: step 1/1. Condenses 4-methyl-5-(beta-hydroxyethyl)thiazole monophosphate (THZ-P) and 2-methyl-4-amino-5-hydroxymethyl pyrimidine pyrophosphate (HMP-PP) to form thiamine monophosphate (TMP). The polypeptide is Thiamine-phosphate synthase (Pseudomonas savastanoi pv. phaseolicola (strain 1448A / Race 6) (Pseudomonas syringae pv. phaseolicola (strain 1448A / Race 6))).